Here is a 500-residue protein sequence, read N- to C-terminus: Probable transcription factor FPSE_09189 (500 aa).

Disordered stretches follow at residues 161-197 (MVRHLSNHPPSGTVPVGPCSRPEPSRASQRPEPPSLA) and 457-500 (IRTG…TQLE). Residues 459–474 (TGHEDSSRDGGRENKA) are compositionally biased toward basic and acidic residues. A compositionally biased stretch (polar residues) spans 475–484 (MNRNRSTGNS).

The protein resides in the nucleus. Functionally, the two putative transcription factors FPSE_09188 and FPSE_09189 could be responsible for orchestrating expression of the W493 A and B biosynthesis cluster genes. W493 A and B consist of six amino acid residues D-allo-thr, L-Ala, D-Ala, L-Gln, D-Tyr, and L-Val/L-Ile linked to a 3-hydroxy-4-methyltetradecanoic acid polyketide chain. The polypeptide is Probable transcription factor FPSE_09189 (Fusarium pseudograminearum (strain CS3096) (Wheat and barley crown-rot fungus)).